We begin with the raw amino-acid sequence, 258 residues long: UPF0246 protein CGSHiEE_07045 (258 aa).

This sequence belongs to the UPF0246 family.

The sequence is that of UPF0246 protein CGSHiEE_07045 from Haemophilus influenzae (strain PittEE).